The sequence spans 364 residues: 2-oxoglutarate-dependent dioxygenase imqE (364 aa).

The segment at 73-92 (KQKAAHPPGPNPQRGWSGIG) is disordered. The Fe2OG dioxygenase domain maps to 199–315 (DGSELRLLHY…RWSAAYFFKA (117 aa)). Fe cation is bound by residues His-227, Asp-229, and His-287. Residue Arg-306 coordinates 2-oxoglutarate.

This sequence belongs to the iron/ascorbate-dependent oxidoreductase family. Fe(2+) serves as cofactor.

The protein operates within secondary metabolite biosynthesis. Functionally, 2-oxoglutarate-dependent dioxygenase; part of the gene cluster that mediates the biosynthesis of imizoquins A to D, tripeptide-derived alkaloids that serve a protective role against oxidative stress that are essential for normal germination. ImqB is a canonical three-module NRPS that assembles the tripeptide backbone of the imizoquins via condensation of Trp, Tyr, and Leu-derived precursors. N-methylation by imqF and phenol oxidation by imqC, followed by cyclization via the FAD-dependent oxidase imqH carry out the three-step transformation of L-tyrosine into tetrahydroisoquinoline. Importantly, this sequence requires the presence of a free amine in the tyrosine moiety, indicating that isoquinoline formation occurs prior to peptide bond formation. The imidazolidin-4-one ring of imizoquins could form following additional oxidation of the methyl-derived bridgehead carbon by imqH. Lastly, O-methylation by imqG and leucine hydroxylation by imqE complete biosynthesis of the imizoquins. The chain is 2-oxoglutarate-dependent dioxygenase imqE from Aspergillus flavus (strain ATCC 200026 / FGSC A1120 / IAM 13836 / NRRL 3357 / JCM 12722 / SRRC 167).